Consider the following 649-residue polypeptide: Probable cyclic nucleotide-gated ion channel 12 (649 aa).

At 1-43 (MNHRRSKFARIDSMGVDGKLKSVRGRLKKVYGKMKTLENWRKT) the chain is on the cytoplasmic side. The helical transmembrane segment at 44–64 (VLLACVVALAIDPLFLFIPLI) threads the bilayer. Residues 65 to 76 (DSQRFCFTFDKT) lie on the Extracellular side of the membrane. A helical transmembrane segment spans residues 77–97 (LVAVVCVIRTFIDTFYVIHII). Residues 98-128 (YYLITETIAPRSQASLRGEIVVHSKATLKTR) are Cytoplasmic-facing. The chain crosses the membrane as a helical span at residues 129–149 (LLFHFIVDIISVLPIPQVVVL). The Extracellular portion of the chain corresponds to 150 to 162 (TLIPLSASLVSER). The helical transmembrane segment at 163–183 (ILKWIILSQYVPRIIRMYPLY) threads the bilayer. Residues 184–200 (KEVTRAFGTVAESKWAG) lie on the Cytoplasmic side of the membrane. A helical transmembrane segment spans residues 201 to 221 (AALNLFLYMLHSYVFGAFWYL). Residues 222-329 (SSIERKSKCW…QNLETSNSAG (108 aa)) are Extracellular-facing. Residues 330 to 350 (EIFFAIIICVSGLLLFAVLIG) traverse the membrane as a helical segment. The Cytoplasmic segment spans residues 351–649 (NVQKYLQSST…ADLEFAKAEA (299 aa)). Residues 436-559 (LNIM…TFRL) and E507 contribute to the a nucleoside 3',5'-cyclic phosphate site. The interval 545 to 560 (LNVFQRQKLQRTFRLY) is calmodulin-binding. Residues 565–594 (RSWAAFFIQAAWRKHCKRKLSKTRDNENIP) enclose the IQ domain. The tract at residues 618–649 (RRKDTADCSSSPDMSPPVPHKPADLEFAKAEA) is disordered. Residues 638–649 (KPADLEFAKAEA) show a composition bias toward basic and acidic residues.

This sequence belongs to the cyclic nucleotide-gated cation channel (TC 1.A.1.5) family. In terms of assembly, homotetramer or heterotetramer.

The protein localises to the cell membrane. In terms of biological role, probable cyclic nucleotide-gated ion channel. The sequence is that of Probable cyclic nucleotide-gated ion channel 12 (CNGC12) from Arabidopsis thaliana (Mouse-ear cress).